The following is a 423-amino-acid chain: Putative protein phosphatase 2C 50 (423 aa).

A PPM-type phosphatase domain is found at 52–380; sequence IFAFPFPTGT…DNMAAVVVPL (329 aa). Mn(2+)-binding residues include Asp-74, Gly-75, Asp-320, and Asp-371.

It belongs to the PP2C family. The cofactor is Mg(2+). Mn(2+) serves as cofactor.

It carries out the reaction O-phospho-L-seryl-[protein] + H2O = L-seryl-[protein] + phosphate. The catalysed reaction is O-phospho-L-threonyl-[protein] + H2O = L-threonyl-[protein] + phosphate. This Arabidopsis thaliana (Mouse-ear cress) protein is Putative protein phosphatase 2C 50.